A 274-amino-acid polypeptide reads, in one-letter code: Nitrogenase iron protein (274 aa).

8–15 serves as a coordination point for ATP; the sequence is GKGGIGKS. Cys94 is a binding site for [4Fe-4S] cluster. Arg97 is subject to ADP-ribosylarginine; by dinitrogenase reductase ADP-ribosyltransferase. Cys131 serves as a coordination point for [4Fe-4S] cluster.

This sequence belongs to the NifH/BchL/ChlL family. As to quaternary structure, homodimer. [4Fe-4S] cluster serves as cofactor. The reversible ADP-ribosylation of Arg-97 inactivates the nitrogenase reductase and regulates nitrogenase activity.

It carries out the reaction N2 + 8 reduced [2Fe-2S]-[ferredoxin] + 16 ATP + 16 H2O = H2 + 8 oxidized [2Fe-2S]-[ferredoxin] + 2 NH4(+) + 16 ADP + 16 phosphate + 6 H(+). Functionally, the key enzymatic reactions in nitrogen fixation are catalyzed by the nitrogenase complex, which has 2 components: the iron protein and the molybdenum-iron protein. The sequence is that of Nitrogenase iron protein from Chlorobium phaeobacteroides (strain DSM 266 / SMG 266 / 2430).